Here is a 207-residue protein sequence, read N- to C-terminus: Nucleoplasmin-2 (207 aa).

Positions 1-15 (MSRHSTSSVTETTAK) are enriched in polar residues. Disordered regions lie at residues 1–20 (MSRH…MLWG) and 121–207 (DLTW…VTKK). Residues 123-147 (TWEDDEEEEEEEEEEDEDEDADISL) are compositionally biased toward acidic residues. The interval 129–152 (EEEEEEEEEDEDEDADISLEEIPV) is acidic tract A2. A Bipartite nuclear localization signal motif is present at residues 165–180 (SIAKKKKVEKEEDETV). Over residues 198 to 207 (PRAKKPVTKK) the composition is skewed to basic residues.

It belongs to the nucleoplasmin family. As to quaternary structure, homopentamer, when bound to H2A-H2B dimers only. Homodecamer of two stacked pentamers, when bound to H2A-H2B dimers and H3-H4 tetramers simultaneously. As to expression, ovary specific.

It localises to the nucleus. In terms of biological role, core histones chaperone involved in chromatin reprogramming, specially during fertilization and early embryonic development. Probably involved in sperm DNA decondensation during fertilization. The sequence is that of Nucleoplasmin-2 (Npm2) from Mus musculus (Mouse).